The chain runs to 1207 residues: DNA-directed RNA polymerase, mitochondrial (1207 aa).

The transit peptide at 1–41 directs the protein to the mitochondrion; sequence MSALRWTRSAAGLGRVLRSPGPHRPPSEEGTFGGFCSSRRS. Disordered regions lie at residues 1–48 and 82–103; these read MSAL…SPRE and KKVQVDRPPQGHSSRWAQKLEA. 2 PPR repeats span residues 232–266 and 267–302; these read TLHMYNTVMLGWARKGSFRELVYVFLMLKDAGLSP and DLCSYAAALQCMGRRDQDVRTIQRCLKQMMEEGFQP. The segment at 702-724 is disordered; it reads VPPPRSEAPRPARYQLPPGSTPV. The mediates interaction with TEFM stretch occupies residues 773–1207; sequence FRGRTYPCPP…QVIRSTYFFS (435 aa). Residues Asp893, Lys962, and Asp1121 contribute to the active site.

It belongs to the phage and mitochondrial RNA polymerase family. In terms of assembly, homodimer. Component of the mitochondrial transcription initiation complex, composed at least of TFB2M, TFAM and POLRMT. In this complex TFAM recruits POLRMT to the promoter whereas TFB2M induces structural changes in POLRMT to enable promoter opening and trapping of the DNA non-template strand. Upon metabolic stress, forms a complex composed of FOXO3, SIRT3 and mitochondrial RNA polymerase POLRMT; the complex is recruited to mtDNA in a SIRT3-dependent manner. Also forms a complex composed of FOXO3, SIRT3, TFAM and POLRMT. Interacts with TFB1M and TFB2M, leading to the stimulation of transcription. Interacts with TEFM. Interacts with MTRES1.

The protein resides in the mitochondrion. It catalyses the reaction RNA(n) + a ribonucleoside 5'-triphosphate = RNA(n+1) + diphosphate. Its function is as follows. DNA-dependent RNA polymerase catalyzes the transcription of mitochondrial DNA into RNA using the four ribonucleoside triphosphates as substrates. Component of the mitochondrial transcription initiation complex, composed at least of TFB2M, TFAM and POLRMT that is required for basal transcription of mitochondrial DNA. In this complex, TFAM recruits POLRMT to a specific promoter whereas TFB2M induces structural changes in POLRMT to enable promoter opening and trapping of the DNA non-template strand. Has DNA primase activity. Catalyzes the synthesis of short RNA primers that are necessary for the initiation of lagging-strand DNA synthesis from the origin of light-strand DNA replication (OriL). The chain is DNA-directed RNA polymerase, mitochondrial from Mus musculus (Mouse).